A 193-amino-acid chain; its full sequence is CASP-like protein 1E1 (193 aa).

The Cytoplasmic segment spans residues 1 to 30; it reads MESQNKASLPVMDGLERRVVASQSEGASTC. A helical transmembrane segment spans residues 31 to 51; the sequence is DLLLRVLALVLTLAAAIVLGV. The Extracellular segment spans residues 52–86; that stretch reads DKQTKVVPIKIVDTLPAINLPVSAKWHYLSAFTYS. A helical membrane pass occupies residues 87–107; that stretch reads VASNAIACSYAALSLVLAVSG. Residues 108 to 113 lie on the Cytoplasmic side of the membrane; sequence KKGIMS. The helical transmembrane segment at 114-134 threads the bilayer; it reads IVIVLDLLMVAMLFSSNGAAL. Topologically, residues 135–162 are extracellular; that stretch reads AIGLMGYQGNSHVRWTKVCHVFGRFCNQ. Residues 163–183 traverse the membrane as a helical segment; sequence VAVSISLSLLGSILFLLLVGI. Over 184–193 the chain is Cytoplasmic; it reads TSLRLHKKSK.

This sequence belongs to the Casparian strip membrane proteins (CASP) family. As to quaternary structure, homodimer and heterodimers.

The protein localises to the cell membrane. The sequence is that of CASP-like protein 1E1 from Populus trichocarpa (Western balsam poplar).